The sequence spans 542 residues: MAAKEVRFHTDAREKMLRGVDILANAVKVTLGPKGRNVVLDKSFGAPRITKDGVTVAKEVELEDKFENMGAQMVREVASKTSDIAGDGTTTATVLAQAIVKEGAKAVASGMNPMDLKRGIDKAVDAIVEELKTNARRVTKNDEIAQVGTISANGDIEIGRFLAEAVEKVGNEGVITVEEAKTAVTELEVVEGMQFDRGYLSPYFVTNPDKMRVELEEPYLLIHEKKLSNLQALLPVLESVVQSGKPLLIIAEDVEGEALATPVVNKLRGGLKIAAVKAPGFGDRRKAMLEDIAILTGGTAISEDLGIKLENVTLNMLGRAKKVVVEKENTTIVDGAGSKSEIQGRVAQIRAQIEETTSDYDREKLQERLAKLAGGVAVIRVGGSTEVEVKERKDRVDDAMHATRAAVEEGVLPGGGVALLRAVKALDSIRTENADQKHGIEIVRRALEAPVRQIAENAGAEGSIIVGKLREKTEFGFGWNAQTNEFGDLYDQGVIDPVKVVRTALQDAASVAGLLITTEAMVAEKPKKDAPLPPMPGGGMDF.

Residues threonine 30–proline 33, lysine 51, aspartate 87–threonine 91, glycine 415, and aspartate 496 each bind ATP.

This sequence belongs to the chaperonin (HSP60) family. In terms of assembly, forms a cylinder of 14 subunits composed of two heptameric rings stacked back-to-back. Interacts with the co-chaperonin GroES.

Its subcellular location is the cytoplasm. It catalyses the reaction ATP + H2O + a folded polypeptide = ADP + phosphate + an unfolded polypeptide.. Together with its co-chaperonin GroES, plays an essential role in assisting protein folding. The GroEL-GroES system forms a nano-cage that allows encapsulation of the non-native substrate proteins and provides a physical environment optimized to promote and accelerate protein folding. This is Chaperonin GroEL 1 from Sinorhizobium fredii (strain NBRC 101917 / NGR234).